The chain runs to 62 residues: Large ribosomal subunit protein bL28 (62 aa).

The tract at residues 1-24 is disordered; sequence MARKCVITGRKTKAGNNRSHAMNS. The segment covering 14 to 24 has biased composition (polar residues); that stretch reads AGNNRSHAMNS.

The protein belongs to the bacterial ribosomal protein bL28 family.

The protein is Large ribosomal subunit protein bL28 of Bacillus pumilus (strain SAFR-032).